A 258-amino-acid chain; its full sequence is Undecaprenyl-diphosphatase (258 aa).

Helical transmembrane passes span Met1–Val21, Leu42–Phe62, Phe69–Ala89, Phe96–Val116, Val135–Thr155, Glu173–Tyr193, Ile211–Leu231, and Phe237–Ile257.

It belongs to the UppP family.

It is found in the cell inner membrane. The catalysed reaction is di-trans,octa-cis-undecaprenyl diphosphate + H2O = di-trans,octa-cis-undecaprenyl phosphate + phosphate + H(+). Its function is as follows. Catalyzes the dephosphorylation of undecaprenyl diphosphate (UPP). Confers resistance to bacitracin. This Campylobacter fetus subsp. fetus (strain 82-40) protein is Undecaprenyl-diphosphatase.